Here is a 119-residue protein sequence, read N- to C-terminus: Transcription and mRNA export factor SUS1 (119 aa).

Belongs to the ENY2 family. As to quaternary structure, component of the nuclear pore complex (NPC)-associated TREX-2 complex (transcription and export complex 2), composed of at least SUS1, SAC3, THP1, SEM1, and CDC31. TREX-2 contains 2 SUS1 chains. The TREX-2 complex interacts with the nucleoporin NUP1. Component of the 1.8 MDa SAGA transcription coactivator-HAT complex. SAGA is built of 5 distinct domains with specialized functions. Within the SAGA complex, SUS1, SGF11, SGF73 and UBP8 form an additional subcomplex of SAGA called the DUB module (deubiquitination module). Interacts directly with THP1, SAC3, SGF11, and with the RNA polymerase II.

The protein resides in the nucleus. Its subcellular location is the nucleoplasm. It localises to the cytoplasm. The protein localises to the P-body. Functionally, involved in mRNA export coupled transcription activation by association with both the TREX-2 and the SAGA complexes. At the promoters, SAGA is required for recruitment of the basal transcription machinery. It influences RNA polymerase II transcriptional activity through different activities such as TBP interaction and promoter selectivity, interaction with transcription activators, and chromatin modification through histone acetylation and deubiquitination. Within the SAGA complex, participates in a subcomplex required for deubiquitination of H2B and for the maintenance of steady-state H3 methylation levels. The TREX-2 complex functions in docking export-competent ribonucleoprotein particles (mRNPs) to the nuclear entrance of the nuclear pore complex (nuclear basket). TREX-2 participates in mRNA export and accurate chromatin positioning in the nucleus by tethering genes to the nuclear periphery. May also be involved in cytoplasmic mRNA decay by interaction with components of P-bodies. This chain is Transcription and mRNA export factor SUS1, found in Candida albicans (strain SC5314 / ATCC MYA-2876) (Yeast).